Here is a 126-residue protein sequence, read N- to C-terminus: Methylglyoxal synthase (126 aa).

The MGS-like domain occupies 1-126; the sequence is MEKKIALIAH…LIKGFEGLNT (126 aa). Residues His10, Lys14, 36–39, and 56–57 each bind substrate; these read TGTT and SG. Residue Asp62 is the Proton donor/acceptor of the active site. His89 contributes to the substrate binding site.

This sequence belongs to the methylglyoxal synthase family.

The catalysed reaction is dihydroxyacetone phosphate = methylglyoxal + phosphate. In terms of biological role, catalyzes the formation of methylglyoxal from dihydroxyacetone phosphate. The sequence is that of Methylglyoxal synthase from Borrelia garinii subsp. bavariensis (strain ATCC BAA-2496 / DSM 23469 / PBi) (Borreliella bavariensis).